The following is a 139-amino-acid chain: Trafficking protein particle complex subunit 2-like protein (139 aa).

The protein belongs to the TRAPP small subunits family. Sedlin subfamily.

Its subcellular location is the cytoplasm. The protein localises to the perinuclear region. It localises to the endoplasmic reticulum. The protein resides in the golgi apparatus. In terms of biological role, may play a role in vesicular transport from endoplasmic reticulum to Golgi. In Taeniopygia guttata (Zebra finch), this protein is Trafficking protein particle complex subunit 2-like protein (TRAPPC2L).